We begin with the raw amino-acid sequence, 294 residues long: Casein kinase II subunit beta (294 aa).

Disordered stretches follow at residues 66 to 90 and 269 to 294; these read DHNT…SKRN and KRME…MASE. Residues 70 to 87 show a composition bias toward low complexity; sequence DNTTTNTSNNNDSRNGTS. Acidic residues predominate over residues 273–288; sequence EDDEEEEDEVEEEDDD.

It belongs to the casein kinase 2 subunit beta family. Tetramer composed of two alpha chains, one beta chain and one beta' chain. Phosphorylated by alpha subunit.

Functionally, regulatory subunit of casein kinase II/CK2. As part of the kinase complex regulates the basal catalytic activity of the alpha subunit a constitutively active serine/threonine-protein kinase that phosphorylates a large number of substrates containing acidic residues C-terminal to the phosphorylated serine or threonine. The polypeptide is Casein kinase II subunit beta (CKB1) (Candida albicans (Yeast)).